The chain runs to 535 residues: Tetrathionate hydrolase (535 aa).

A signal peptide spans 1–39 (MNLKILVGLFILGIIILSAMTFLNFTTIVAQDKGDQQPK). N-linked (GlcNAc...) asparagine glycosylation is present at asparagine 50.

This sequence belongs to the tetrathionate hydrolase family. Monomer and homodimer; in equilibrium.

Its subcellular location is the cell surface. It catalyses the reaction tetrathionate + H2O = sulfur + thiosulfate + sulfate + H(+). Its function is as follows. Catalyzes the hydrolysis of tetrathionate to generate elemental sulfur, thiosulfate and sulfate. This Acidianus ambivalens (Desulfurolobus ambivalens) protein is Tetrathionate hydrolase.